Consider the following 340-residue polypeptide: Polyporopepsin (340 aa).

Residues 14–330 (YVVNVGVGSP…DTTNKRLGLA (317 aa)) form the Peptidase A1 domain. Aspartate 32 is an active-site residue. A glycan (N-linked (GlcNAc...) asparagine) is linked at asparagine 192. Residue aspartate 212 is part of the active site. Asparagine 238 is a glycosylation site (N-linked (GlcNAc...) asparagine).

Belongs to the peptidase A1 family.

It catalyses the reaction Milk clotting activity, broad specificity, but fails to cleave 15-Leu-|-Tyr-16 or 16-Tyr-|-Leu-17 of insulin B chain.. In Irpex lacteus (Milk-white toothed polypore), this protein is Polyporopepsin.